The chain runs to 253 residues: Ribosomal RNA small subunit methyltransferase A (253 aa).

The S-adenosyl-L-methionine site is built by histidine 12, leucine 14, glycine 39, glutamate 60, aspartate 81, and asparagine 104.

Belongs to the class I-like SAM-binding methyltransferase superfamily. rRNA adenine N(6)-methyltransferase family. RsmA subfamily.

It is found in the cytoplasm. The catalysed reaction is adenosine(1518)/adenosine(1519) in 16S rRNA + 4 S-adenosyl-L-methionine = N(6)-dimethyladenosine(1518)/N(6)-dimethyladenosine(1519) in 16S rRNA + 4 S-adenosyl-L-homocysteine + 4 H(+). Specifically dimethylates two adjacent adenosines (A1518 and A1519) in the loop of a conserved hairpin near the 3'-end of 16S rRNA in the 30S particle. May play a critical role in biogenesis of 30S subunits. This is Ribosomal RNA small subunit methyltransferase A from Acidovorax ebreus (strain TPSY) (Diaphorobacter sp. (strain TPSY)).